A 791-amino-acid chain; its full sequence is Phenylalanine--tRNA ligase beta subunit (791 aa).

Residues 39-147 (GDALGQVVVA…DDAPVGQALA (109 aa)) enclose the tRNA-binding domain. The B5 domain occupies 400-475 (PQPASILLRR…RIHGYDRVPT (76 aa)). Residues D453, D459, E462, and E463 each coordinate Mg(2+). One can recognise an FDX-ACB domain in the interval 697 to 790 (SRYPSMRRDL…IEREHRARIR (94 aa)).

The protein belongs to the phenylalanyl-tRNA synthetase beta subunit family. Type 1 subfamily. As to quaternary structure, tetramer of two alpha and two beta subunits. The cofactor is Mg(2+).

Its subcellular location is the cytoplasm. The enzyme catalyses tRNA(Phe) + L-phenylalanine + ATP = L-phenylalanyl-tRNA(Phe) + AMP + diphosphate + H(+). This Xanthomonas campestris pv. campestris (strain 8004) protein is Phenylalanine--tRNA ligase beta subunit.